Consider the following 456-residue polypeptide: Na(+)/H(+) antiporter NhaA 3 (456 aa).

Transmembrane regions (helical) follow at residues 32-52, 87-107, 114-134, 145-165, 174-194, 202-222, 233-253, 318-338, 347-367, 382-402, and 417-437; these read IEAT…TLSN, GLMT…VVLG, MVAL…GLYL, GWGV…ALLG, VFLL…VAVG, TALA…LLGV, AIIW…GVIL, WVAF…PITI, LAVM…FAWL, WGGL…ALFI, and LGIL…LCAL.

It belongs to the NhaA Na(+)/H(+) (TC 2.A.33) antiporter family.

It localises to the cell inner membrane. The enzyme catalyses Na(+)(in) + 2 H(+)(out) = Na(+)(out) + 2 H(+)(in). Na(+)/H(+) antiporter that extrudes sodium in exchange for external protons. The sequence is that of Na(+)/H(+) antiporter NhaA 3 from Acidiphilium cryptum (strain JF-5).